Consider the following 426-residue polypeptide: Cytochrome c biogenesis protein CcsB (426 aa).

The next 3 membrane-spanning stretches (helical) occupy residues 11–31 (LRVAIVLLFLIALASAVGTAI), 69–89 (SVWFLSLLAWLGLALILCSWR), and 159–179 (VGPLLVHTGLILLMLGAVWGV).

It belongs to the Ccs1/CcsB family. In terms of assembly, may interact with CcsA.

Its subcellular location is the cellular thylakoid membrane. Functionally, required during biogenesis of c-type cytochromes (cytochrome c6 and cytochrome f) at the step of heme attachment. This is Cytochrome c biogenesis protein CcsB from Synechococcus sp. (strain CC9902).